Consider the following 292-residue polypeptide: Aquaporin-3 (292 aa).

Residues 1–24 (MGRQKELVNRCGEMLHIRYRLLRQ) lie on the Cytoplasmic side of the membrane. A helical membrane pass occupies residues 25–42 (ALAECLGTLILVMFGCGS). Residues 43-56 (VAQVVLSRGTHGGF) are Extracellular-facing. Residues 57 to 74 (LTINLAFGFAVTLGILIA) traverse the membrane as a helical segment. Residues 75 to 78 (GQVS) are Cytoplasmic-facing. Positions 79–92 (GAHLNPAVTFAMCF) form an intramembrane region, discontinuously helical. The NPA 1 motif lies at 83–85 (NPA). Residues 93–100 (LAREPWIK) lie on the Cytoplasmic side of the membrane. A helical transmembrane segment spans residues 101–121 (LPVYTLAQTLGAFLGAGIIFG). At 122–159 (LYYDAIWAFANNQLIVSGPNGTAGIFATYPSGHLDMVN) the chain is on the extracellular side. N-linked (GlcNAc...) asparagine glycosylation is present at N141. The helical transmembrane segment at 160-177 (GFFDQFIGTASLIVCVLA) threads the bilayer. Topologically, residues 178-189 (IVDPYNNPVPRG) are cytoplasmic. The helical transmembrane segment at 190–206 (LEAFTVGLVVLVIGTSM) threads the bilayer. Residues 207–210 (GFNS) are Extracellular-facing. Positions 211–224 (GYAVNPARDFGPRL) form an intramembrane region, discontinuously helical. The NPA 2 signature appears at 215 to 217 (NPA). The Extracellular portion of the chain corresponds to 225–242 (FTAIAGWGSEVFTTGRHW). The helical transmembrane segment at 243–264 (WWVPIVSPLLGSIAGVFVYQLM) threads the bilayer. Topologically, residues 265-292 (IGCHLEPPPPSTDEENVKLSHVKHKEQM) are cytoplasmic.

It belongs to the MIP/aquaporin (TC 1.A.8) family. In terms of assembly, homotetramer; each monomer provides an independent glycerol/water pore. Could also exist in other oligomeric states.

The protein localises to the cell membrane. It is found in the basolateral cell membrane. It carries out the reaction glycerol(in) = glycerol(out). It catalyses the reaction H2O(in) = H2O(out). The enzyme catalyses urea(in) = urea(out). The catalysed reaction is H2O2(out) = H2O2(in). In terms of biological role, aquaglyceroporins form homotetrameric transmembrane channels, with each monomer independently mediating glycerol and water transport across the plasma membrane along their osmotic gradient. Could also be permeable to urea. Also participates in cell permeability to H2O2 and H2O2-mediated signaling. In skin, transports glycerol to the epidermis and stratum corneum, where it maintains hydration, elasticity, and supports lipid biosynthesis for barrier repair. In kidney, contributes to the reabsorption of water, helping the body maintain proper fluid balance. The sequence is that of Aquaporin-3 from Bos taurus (Bovine).